The chain runs to 216 residues: Large ribosomal subunit protein uL3 (216 aa).

The tract at residues 134-153 is disordered; sequence RATHGNSRSHNVPGSIGMAQ. The residue at position 153 (Gln153) is an N5-methylglutamine.

This sequence belongs to the universal ribosomal protein uL3 family. Part of the 50S ribosomal subunit. Forms a cluster with proteins L14 and L19. Methylated by PrmB.

One of the primary rRNA binding proteins, it binds directly near the 3'-end of the 23S rRNA, where it nucleates assembly of the 50S subunit. This chain is Large ribosomal subunit protein uL3, found in Cupriavidus pinatubonensis (strain JMP 134 / LMG 1197) (Cupriavidus necator (strain JMP 134)).